Consider the following 505-residue polypeptide: MFS efflux pump atnC (505 aa).

A run of 12 helical transmembrane segments spans residues 48-68 (VLQV…GLTV), 117-137 (LIGW…IPYG), 148-168 (VLLL…LVCW), 181-201 (LFQC…ATIA), 216-236 (LQAT…VLMA), 240-260 (WTPC…LIAL), 304-324 (VAGL…LDFL), 343-363 (LSLR…LLLF), 377-399 (LLIA…LSPT), 403-425 (AILV…ASLW), 439-459 (TVAI…SLMY), and 469-489 (WVGL…GVLL).

This sequence belongs to the major facilitator superfamily.

The protein resides in the membrane. It participates in secondary metabolite biosynthesis. Functionally, MFS efflux pump; part of the gene cluster that mediates the biosynthesis of aspercryptins, linear lipopeptides built from six amino acids including 2 highly unusual and nonproteogenic amino acids, 2-amino-octanoic acid (2aoa) and 2-amino-dodecanol (2adol). This is MFS efflux pump atnC from Emericella nidulans (strain FGSC A4 / ATCC 38163 / CBS 112.46 / NRRL 194 / M139) (Aspergillus nidulans).